A 130-amino-acid polypeptide reads, in one-letter code: Small ribosomal subunit protein uS8 (130 aa).

The protein belongs to the universal ribosomal protein uS8 family. As to quaternary structure, part of the 30S ribosomal subunit. Contacts proteins S5 and S12.

Its function is as follows. One of the primary rRNA binding proteins, it binds directly to 16S rRNA central domain where it helps coordinate assembly of the platform of the 30S subunit. This chain is Small ribosomal subunit protein uS8, found in Klebsiella pneumoniae (strain 342).